The sequence spans 489 residues: WPP domain-interacting protein 1 (489 aa).

The disordered stretch occupies residues S49–V73. 3 consecutive short sequence motifs (nuclear localization signal) follow at residues R80 to K81, R83 to R84, and K104 to R105. Positions P195–S264 are disordered. The segment covering G215–N224 has biased composition (basic and acidic residues). Residues E323–I446 are a coiled coil. The KASH domain maps to S459–T489. Residues Y460–L480 form a helical membrane-spanning segment.

In terms of assembly, homodimer and heterodimer with WIP2. Component of Ran complexes at least composed of WIT1 or WIT2, RANGAP1 or RANGAP2, and WIP1 or WIP2 or WIP3. Interacts with RANGAP1, RANGAP2, WPP1/MAF1, and WPP2/MAF2. Interacts with SUN1 and SUN2. Interacts with KIN1. Core component of the LINC complex which is composed of inner nuclear membrane SUN domain-containing proteins coupled to outer nuclear membrane WIP and WIT proteins. The LINC complex also involves nucleoskeletal proteins CRWN/LINC and possibly KAKU4 and the cytoskeletal myosin KAKU1. Interacts with WIT1 and SUN2. Interacts with WIT2. Interacts with SUN3. As to expression, expressed in seedlings, roots, stems, leaves, and flowers.

It is found in the nucleus envelope. Its subcellular location is the nucleus membrane. Its function is as follows. Mediates and enhances the nuclear envelope docking of RANGAP proteins mediated by WIT1 and WIT2 in the undifferentiated cells of root tips. As component of the SUN-WIP-WIT2-KAKU1 complex, mediates the transfer of cytoplasmic forces to the nuclear envelope (NE), leading to nuclear shape changes. In Arabidopsis thaliana (Mouse-ear cress), this protein is WPP domain-interacting protein 1 (WIP1).